A 387-amino-acid polypeptide reads, in one-letter code: Trichocyst matrix protein T2-C (387 aa).

Residues 1–19 form the signal peptide; sequence MKTIILALALIVLASSTQA. Residues 20–48 constitute a propeptide that is removed on maturation; the sequence is DVIATIKKIDQSPFGRTLFDTIWLELQTG. Residues 51–163 are a coiled coil; sequence LDRLLQTLTD…KVLEHQEATA (113 aa). The propeptide occupies 184 to 239; the sequence is KGKATKQPAHKFTKEVASMIQKHFTTSAKKAAKFQHRKGYSKLFKAFATIASKVEQ. Residues 294–333 are a coiled coil; that stretch reads TALANAQSDLAALNDVIAQVEASLDTTNQRIENVSADRND.

The protein belongs to the TMP family. In terms of processing, two components are produced by post-translational processing from the precursor peptide.

It is found in the trichocyst. Structural protein that crystallize inside the trichocyst matrix. This is Trichocyst matrix protein T2-C (T2C) from Paramecium tetraurelia.